The following is a 454-amino-acid chain: MDKRIFGIETEFGISYSSPDSRPLAPEEVARYLFRKVVSWGRSSNVFLTNGSRLYLDVGSHPEYATAECDDLGQLIAHDRAGELILDDLVDEAQERLAAEGFNGTVYLFKNNTDSAGNSYGSHENYLIPRRGEFSRLAEILIPFLVTRQLIAGAGKILKTPHGATFAFSQRADHIWEGVSSATTRSRPIINTRDEPHADAEFYRRLHVIVGDSNMSETTALMKVGTVDLILRMIEAGVIMRDMRMENPIRSIREISHDLSGRALIRLANGRQLTALEIQREYLNKVTSFVAENGAHNQHVPLILDLWERTLTAIESGDTSTIDTEIDWAIKKKLMDSYRKRHGLGLDAPRIAQLDLTYHDISRTRGLYYLLQSRGAVRRVVDDTAVKDAVDAPPQTTRAKLRGDFVRRAQELGRDYTVDWVHLKLNDRAHQTILCKDPFRNVDERVDALLDSMG.

Glutamate 9 contacts Mg(2+). Arginine 53 is an ATP binding site. Tyrosine 55 contributes to the Mg(2+) binding site. The active-site Proton acceptor is aspartate 57. Residue glutamate 63 participates in Mg(2+) binding. Threonine 66 and tryptophan 420 together coordinate ATP.

The protein belongs to the Pup ligase/Pup deamidase family. Pup-conjugating enzyme subfamily.

The enzyme catalyses ATP + [prokaryotic ubiquitin-like protein]-L-glutamate + [protein]-L-lysine = ADP + phosphate + N(6)-([prokaryotic ubiquitin-like protein]-gamma-L-glutamyl)-[protein]-L-lysine.. It participates in protein degradation; proteasomal Pup-dependent pathway. The protein operates within protein modification; protein pupylation. Functionally, catalyzes the covalent attachment of the prokaryotic ubiquitin-like protein modifier Pup to the proteasomal substrate proteins, thereby targeting them for proteasomal degradation. This tagging system is termed pupylation. The ligation reaction involves the side-chain carboxylate of the C-terminal glutamate of Pup and the side-chain amino group of a substrate lysine. In Arthrobacter sp. (strain FB24), this protein is Pup--protein ligase.